Reading from the N-terminus, the 402-residue chain is Tryptophan synthase beta chain (402 aa).

K92 bears the N6-(pyridoxal phosphate)lysine mark.

The protein belongs to the TrpB family. In terms of assembly, tetramer of two alpha and two beta chains. Requires pyridoxal 5'-phosphate as cofactor.

The enzyme catalyses (1S,2R)-1-C-(indol-3-yl)glycerol 3-phosphate + L-serine = D-glyceraldehyde 3-phosphate + L-tryptophan + H2O. It participates in amino-acid biosynthesis; L-tryptophan biosynthesis; L-tryptophan from chorismate: step 5/5. Its function is as follows. The beta subunit is responsible for the synthesis of L-tryptophan from indole and L-serine. The chain is Tryptophan synthase beta chain from Staphylococcus epidermidis (strain ATCC 35984 / DSM 28319 / BCRC 17069 / CCUG 31568 / BM 3577 / RP62A).